We begin with the raw amino-acid sequence, 108 residues long: Thiosulfate sulfurtransferase GlpE (108 aa).

The Rhodanese domain maps to 17 to 105; the sequence is KDGSAALVDI…WARQYPQDVE (89 aa). Residue Cys65 is the Cysteine persulfide intermediate of the active site.

Belongs to the GlpE family.

The protein resides in the cytoplasm. The enzyme catalyses thiosulfate + hydrogen cyanide = thiocyanate + sulfite + 2 H(+). It carries out the reaction thiosulfate + [thioredoxin]-dithiol = [thioredoxin]-disulfide + hydrogen sulfide + sulfite + 2 H(+). Transferase that catalyzes the transfer of sulfur from thiosulfate to thiophilic acceptors such as cyanide or dithiols. May function in a CysM-independent thiosulfate assimilation pathway by catalyzing the conversion of thiosulfate to sulfite, which can then be used for L-cysteine biosynthesis. This Serratia proteamaculans (strain 568) protein is Thiosulfate sulfurtransferase GlpE.